Reading from the N-terminus, the 387-residue chain is Homoserine O-succinyltransferase (387 aa).

In terms of domain architecture, AB hydrolase-1 spans 45–354 (NAVLVCHALN…DAPHGHDAFL (310 aa)). Residue S151 is the Nucleophile of the active site. R221 serves as a coordination point for substrate. Catalysis depends on residues D317 and H350. Substrate is bound at residue D351.

The protein belongs to the AB hydrolase superfamily. MetX family. Homodimer.

The protein localises to the cytoplasm. It catalyses the reaction L-homoserine + succinyl-CoA = O-succinyl-L-homoserine + CoA. It functions in the pathway amino-acid biosynthesis; L-methionine biosynthesis via de novo pathway; O-succinyl-L-homoserine from L-homoserine: step 1/1. Transfers a succinyl group from succinyl-CoA to L-homoserine, forming succinyl-L-homoserine. The polypeptide is Homoserine O-succinyltransferase (Methylibium petroleiphilum (strain ATCC BAA-1232 / LMG 22953 / PM1)).